Here is a 372-residue protein sequence, read N- to C-terminus: Lipoyl synthase, mitochondrial (372 aa).

Residues 1 to 27 constitute a mitochondrion transit peptide; that stretch reads MSLRCGGAVRTVGPRVFGRYVFSPVRE. Residues Cys-106, Cys-111, Cys-117, Cys-137, Cys-141, Cys-144, and Ser-352 each coordinate [4Fe-4S] cluster. Residues 122–341 enclose the Radical SAM core domain; it reads EYATATATIM…EKVGNELGFH (220 aa).

This sequence belongs to the radical SAM superfamily. Lipoyl synthase family. Requires [4Fe-4S] cluster as cofactor.

The protein resides in the mitochondrion. The enzyme catalyses [[Fe-S] cluster scaffold protein carrying a second [4Fe-4S](2+) cluster] + N(6)-octanoyl-L-lysyl-[protein] + 2 oxidized [2Fe-2S]-[ferredoxin] + 2 S-adenosyl-L-methionine + 4 H(+) = [[Fe-S] cluster scaffold protein] + N(6)-[(R)-dihydrolipoyl]-L-lysyl-[protein] + 4 Fe(3+) + 2 hydrogen sulfide + 2 5'-deoxyadenosine + 2 L-methionine + 2 reduced [2Fe-2S]-[ferredoxin]. Its pathway is protein modification; protein lipoylation via endogenous pathway; protein N(6)-(lipoyl)lysine from octanoyl-[acyl-carrier-protein]: step 2/2. Its function is as follows. Catalyzes the radical-mediated insertion of two sulfur atoms into the C-6 and C-8 positions of the octanoyl moiety bound to the lipoyl domains of lipoate-dependent enzymes, thereby converting the octanoylated domains into lipoylated derivatives. This is Lipoyl synthase, mitochondrial from Bos taurus (Bovine).